The sequence spans 91 residues: Small ribosomal subunit protein bS20 (91 aa).

The segment covering 1–21 has biased composition (basic and acidic residues); it reads MPLHKSAEKRLRQSARRNERN. 2 disordered regions span residues 1–25 and 70–91; these read MPLHKSAEKRLRQSARRNERNRARK and PNKASRKKSQLSRMLNNYMKAE. A compositionally biased stretch (basic residues) spans 70–79; sequence PNKASRKKSQ.

It belongs to the bacterial ribosomal protein bS20 family.

Functionally, binds directly to 16S ribosomal RNA. This Chlorobium phaeobacteroides (strain BS1) protein is Small ribosomal subunit protein bS20.